The primary structure comprises 160 residues: Major pollen allergen Bet v 1-C (160 aa).

Brassinolide is bound by residues Lys55, Tyr82, Tyr84, and Asn101.

This sequence belongs to the BetVI family.

The protein resides in the cytoplasm. Functionally, may be a general steroid carrier protein. The chain is Major pollen allergen Bet v 1-C (BETV1C) from Betula pendula (European white birch).